The sequence spans 480 residues: Probable GH family 25 lysozyme 3 (480 aa).

Positions 1–20 (MNKLILSILSVLLIVSIASA) are cleaved as a signal peptide. In terms of domain architecture, Ch-type lysozyme spans 21 to 231 (GNGIDISSGT…STTSSSATSS (211 aa)). Catalysis depends on residues Asp-25, Asp-114, and Glu-116. Residues 219–472 (SGSSTTSSSA…SSGSGNYTSG (254 aa)) show a composition bias toward low complexity. Residues 219–480 (SGSSTTSSSA…SGSGNGAFLF (262 aa)) are disordered. N-linked (GlcNAc...) asparagine glycosylation is found at Asn-423, Asn-428, Asn-437, Asn-446, and Asn-468.

Belongs to the glycosyl hydrolase 25 family.

It localises to the secreted. It catalyses the reaction Hydrolysis of (1-&gt;4)-beta-linkages between N-acetylmuramic acid and N-acetyl-D-glucosamine residues in a peptidoglycan and between N-acetyl-D-glucosamine residues in chitodextrins.. The sequence is that of Probable GH family 25 lysozyme 3 from Dictyostelium discoideum (Social amoeba).